We begin with the raw amino-acid sequence, 308 residues long: Transaldolase (308 aa).

The active-site Schiff-base intermediate with substrate is the lysine 125.

This sequence belongs to the transaldolase family. Type 1 subfamily. In terms of assembly, homodimer.

The protein localises to the cytoplasm. The enzyme catalyses D-sedoheptulose 7-phosphate + D-glyceraldehyde 3-phosphate = D-erythrose 4-phosphate + beta-D-fructose 6-phosphate. The protein operates within carbohydrate degradation; pentose phosphate pathway; D-glyceraldehyde 3-phosphate and beta-D-fructose 6-phosphate from D-ribose 5-phosphate and D-xylulose 5-phosphate (non-oxidative stage): step 2/3. Functionally, transaldolase is important for the balance of metabolites in the pentose-phosphate pathway. The protein is Transaldolase of Stutzerimonas stutzeri (strain A1501) (Pseudomonas stutzeri).